The sequence spans 103 residues: Small ribosomal subunit protein uS10 (103 aa).

It belongs to the universal ribosomal protein uS10 family. As to quaternary structure, part of the 30S ribosomal subunit.

Functionally, involved in the binding of tRNA to the ribosomes. The chain is Small ribosomal subunit protein uS10 from Chlorobium luteolum (strain DSM 273 / BCRC 81028 / 2530) (Pelodictyon luteolum).